The primary structure comprises 331 residues: Glyceraldehyde-3-phosphate dehydrogenase (331 aa).

Residues 12 to 13 (RI), Asp-34, Arg-78, and Thr-120 contribute to the NAD(+) site. N6-acetyllysine occurs at positions 132 and 138. D-glyceraldehyde 3-phosphate is bound by residues 149–151 (SCT) and Thr-180. The active-site Nucleophile is the Cys-150. N6-acetyllysine is present on Lys-192. D-glyceraldehyde 3-phosphate-binding positions include 209–210 (TG) and Arg-232. At Lys-249 the chain carries N6-acetyllysine. NAD(+) is bound at residue Asn-314.

Belongs to the glyceraldehyde-3-phosphate dehydrogenase family. Homotetramer.

It is found in the cytoplasm. It catalyses the reaction D-glyceraldehyde 3-phosphate + phosphate + NAD(+) = (2R)-3-phospho-glyceroyl phosphate + NADH + H(+). It functions in the pathway carbohydrate degradation; glycolysis; pyruvate from D-glyceraldehyde 3-phosphate: step 1/5. Its function is as follows. Catalyzes the oxidative phosphorylation of glyceraldehyde 3-phosphate (G3P) to 1,3-bisphosphoglycerate (BPG) using the cofactor NAD. The first reaction step involves the formation of a hemiacetal intermediate between G3P and a cysteine residue, and this hemiacetal intermediate is then oxidized to a thioester, with concomitant reduction of NAD to NADH. The reduced NADH is then exchanged with the second NAD, and the thioester is attacked by a nucleophilic inorganic phosphate to produce BPG. The sequence is that of Glyceraldehyde-3-phosphate dehydrogenase (gapA) from Escherichia coli O6:H1 (strain CFT073 / ATCC 700928 / UPEC).